The sequence spans 357 residues: Protein ATP1B4 (357 aa).

Over 1-110 (MRRQLRSRRA…FLARTGQSWS (110 aa)) the chain is Nuclear. The disordered stretch occupies residues 15-80 (YSYRYRLDDP…EEGQGQPTGN (66 aa)). Residues 52–73 (EEEEEEEEKEEEEEEEKEEEEG) show a composition bias toward acidic residues. Residues 111 to 131 (LILLIYFFFYASLAAVITLCM) traverse the membrane as a helical; Signal-anchor for type II membrane protein segment. Topologically, residues 132 to 357 (YTLFLTISPY…RVIFTLNIET (226 aa)) are perinuclear space.

The protein belongs to the X(+)/potassium ATPases subunit beta family. As to quaternary structure, associates with a SMAD7-transcriptional complex. Interacts with SNW1 and TOR1AIP1. According to PubMed:17592128, does not associate with known Na,K-ATPase alpha-subunits. As to expression, highly expressed in skeletal muscle and at a lower level in heart.

It localises to the nucleus inner membrane. In terms of biological role, may act as a transcriptional coregulator during muscle development through its interaction with SNW1. Has lost its ancestral function as a Na,K-ATPase beta-subunit. The sequence is that of Protein ATP1B4 (ATP1B4) from Homo sapiens (Human).